A 366-amino-acid polypeptide reads, in one-letter code: Zinc finger CCCH domain-containing protein 11 (366 aa).

Positions 43-66 are disordered; it reads LHQAVQPKPDPTKTAAKKKKEEEK. The stretch at 54-79 forms a coiled coil; that stretch reads TKTAAKKKKEEEKAREKELNDLFKVA. 2 consecutive C3H1-type zinc fingers follow at residues 90-117 and 160-198; these read DPKS…HDLN and KPTD…HALP. The stretch at 208 to 234 forms a coiled coil; sequence KALLEEESEKIAIEDEIEDQRKKVKTT. Positions 293 to 338 are disordered; sequence YERQEESEANEEPSNKNQDEGPSSSTSNGKEVEESDDEDINIDDDL. The span at 312-321 shows a compositional bias: polar residues; the sequence is EGPSSSTSNG. Positions 325–338 are enriched in acidic residues; the sequence is EESDDEDINIDDDL.

This is Zinc finger CCCH domain-containing protein 11 from Oryza sativa subsp. japonica (Rice).